Consider the following 123-residue polypeptide: Large ribosomal subunit protein bL12 (123 aa).

The protein belongs to the bacterial ribosomal protein bL12 family. Homodimer. Part of the ribosomal stalk of the 50S ribosomal subunit. Forms a multimeric L10(L12)X complex, where L10 forms an elongated spine to which 2 to 4 L12 dimers bind in a sequential fashion. Binds GTP-bound translation factors.

Functionally, forms part of the ribosomal stalk which helps the ribosome interact with GTP-bound translation factors. Is thus essential for accurate translation. In Clostridium acetobutylicum (strain ATCC 824 / DSM 792 / JCM 1419 / IAM 19013 / LMG 5710 / NBRC 13948 / NRRL B-527 / VKM B-1787 / 2291 / W), this protein is Large ribosomal subunit protein bL12.